A 521-amino-acid polypeptide reads, in one-letter code: Ankyrin repeat and death domain-containing protein 1B (521 aa).

10 ANK repeats span residues 60–89 (AIERSFQNAAKSSNLDLMEKLFEKKVNINA), 93–122 (MNRTALHFAVGRNSLSAVDFLLSHKARVDV), 126–155 (HGLTVIHLAAWSGSFEIMLMLVKAGADQRA), 159–190 (EGMNALHLAAQNNNLHIVDYLIHDLHLHDLNQ), 194–223 (RGRKPFHLAAERGHVEMIEKLIFLNLHTSE), 227–256 (DGNTALHLAAMHGHSPAVQVLLTQWSEVNE), 260–289 (LNVSALQTATRNGHTALVNFLLGENADLQQ), 293–322 (SKEPPLHLAVINNRPAVVNSLLSARHDVDV), 326–355 (RRQTPLHVAADLGNVELVETLLKAGCNLKI), and 359–388 (QGKTALAVAARSQHSLVVDMLIKAERYYAW). Positions 420–508 (TLLWNLAYRQ…ELAEKIRQFK (89 aa)) constitute a Death domain.

The sequence is that of Ankyrin repeat and death domain-containing protein 1B (Ankdd1b) from Mus musculus (Mouse).